A 504-amino-acid polypeptide reads, in one-letter code: Xanthotoxol synthase (504 aa).

The helical transmembrane segment at P3–H23 threads the bilayer. Residues P363–I368 form a substrate specificity region. C444 is a heme binding site.

Belongs to the cytochrome P450 family. Heme is required as a cofactor.

It localises to the microsome membrane. It catalyses the reaction psoralen + reduced [NADPH--hemoprotein reductase] + O2 = xanthotoxol + oxidized [NADPH--hemoprotein reductase] + H2O + H(+). The enzyme catalyses 6-methoxycoumarin + reduced [NADPH--hemoprotein reductase] + O2 = scopoletin + oxidized [NADPH--hemoprotein reductase] + H2O + H(+). The protein operates within secondary metabolite biosynthesis. In terms of biological role, involved in the biosynthesis of coumarins and furanocoumarins (FCs), natural products required for defense responses against attacks by predators with potential medical and agroindustrial usages such as anticoagulant, rodenticide and artificial vanilla substitutes. Catalyzes the conversion of psoralen into xanthotoxol and of 6-methoxycoumarin into scopoletin. Can also convert with a lower efficiency scopoletin into fraxetin and 7-methoxycoumarin into daphnetin-7-methylether, and use 7-methoxy-3-methylcoumarin as substrate. The protein is Xanthotoxol synthase of Pastinaca sativa (Wild parsnip).